Reading from the N-terminus, the 805-residue chain is 1,4-alpha-glucan-branching enzyme 2-2, chloroplastic/amyloplastic (805 aa).

A chloroplast-targeting transit peptide spans 1–32; sequence MVVIHGVSLTPRFTLPSRPLNTGFNAGNSTLS. The active-site Nucleophile is Asp451. Glu506 functions as the Proton donor in the catalytic mechanism.

Belongs to the glycosyl hydrolase 13 family. GlgB subfamily. Monomer. In terms of tissue distribution, expressed in seedlings, roots, stems, leaves, inflorescences, seeds and flowers.

Its subcellular location is the plastid. The protein resides in the chloroplast stroma. The protein localises to the amyloplast. It catalyses the reaction Transfers a segment of a (1-&gt;4)-alpha-D-glucan chain to a primary hydroxy group in a similar glucan chain.. Its pathway is glycan biosynthesis; starch biosynthesis. Functionally, catalyzes the formation of the alpha-1,6-glucosidic linkages in starch by scission of a 1,4-alpha-linked oligosaccharide from growing alpha-1,4-glucan chains and the subsequent attachment of the oligosaccharide to the alpha-1,6 position. The polypeptide is 1,4-alpha-glucan-branching enzyme 2-2, chloroplastic/amyloplastic (SBE2.2) (Arabidopsis thaliana (Mouse-ear cress)).